A 207-amino-acid chain; its full sequence is Histone H1 (207 aa).

Over residues 1-15 (MAEVAPAPAAAAPAK) the composition is skewed to low complexity. 2 disordered regions span residues 1 to 28 (MAEVAPAPAAAAPAKAPKKKAAAKPKKA) and 105 to 207 (EAKK…PKKK). Alanine 2 carries the N-acetylalanine modification. A compositionally biased stretch (basic residues) spans 16–27 (APKKKAAAKPKK). The 74-residue stretch at 28–101 (AGPSVGELIV…GASGSFKLNK (74 aa)) folds into the H15 domain. Composition is skewed to basic residues over residues 117 to 168 (KAKK…KVKK) and 175 to 207 (KAAKSPKKATKAAKPKAAKPKAAKAKKAAPKKK).

Belongs to the histone H1/H5 family. Oncorhyncin II is expressed in skin.

It localises to the nucleus. The protein localises to the chromosome. It is found in the secreted. Functionally, histones H1 are necessary for the condensation of nucleosome chains into higher-order structures. Its function is as follows. Oncorhyncin II has antibacterial activity against Gram-positive and Gram-negative bacteria at submicromolar concentrations. Potentially important role in mucosal defense. The polypeptide is Histone H1 (Oncorhynchus mykiss (Rainbow trout)).